The primary structure comprises 466 residues: MGVFVVLLSIATLFGSTSGTALGPRGNHSDCTSVDRGYQCFPELSHKWGLYAPYFSLQDESPFPLDVPDDCHITFVQVLARHGARSPTDSKTKAYAATIAAIQKNATALPGKYAFLKSYNYSMGSENLNPFGRNQLQDLGAQFYRRYDTLTRHINPFVRAADSSRVHESAEKFVEGFQNARQGDPHANPHQPSPRVDVVIPEGTAYNNTLEHSICTAFEASTVGDAAADNFTAVFAPAIAKRLEADLPGVQLSADDVVNLMAMCPFETVSLTDDAHTLSPFCDLFTAAEWTQYNYLLSLDKYYGYGGGNPLGPVQGVGWANELIARLTRSPVHDHTCVNNTLDANPATFPLNATLYADFSHDSNLVSIFWALGLYNGTKPLSQTTVEDITRTDGYAAAWTVPFAARAYIEMMQCRAEKQPLVRVLVNDRVMPLHGCAVDNLGRCKRDDFVEGLSFARAGGNWAECF.

Residues 1–19 (MGVFVVLLSIATLFGSTSG) form the signal peptide. N-linked (GlcNAc...) asparagine glycosylation is present at Asn-27. Cys-31 and Cys-40 are joined by a disulfide. The 1D-myo-inositol hexakisphosphate site is built by Tyr-51, Arg-81, His-82, Arg-85, and Thr-88. Intrachain disulfides connect Cys-71/Cys-414, Cys-215/Cys-465, Cys-264/Cys-282, and Cys-436/Cys-444. His-82 serves as the catalytic Nucleophile. N-linked (GlcNAc...) asparagine glycans are attached at residues Asn-105 and Asn-120. Arg-165 lines the 1D-myo-inositol hexakisphosphate pocket. N-linked (GlcNAc...) asparagine glycans are attached at residues Asn-207 and Asn-230. Residue Lys-301 participates in 1D-myo-inositol hexakisphosphate binding. Residues Asn-339 and Asn-352 are each glycosylated (N-linked (GlcNAc...) asparagine). 2 residues coordinate 1D-myo-inositol hexakisphosphate: His-361 and Asp-362. Asn-376 is a glycosylation site (N-linked (GlcNAc...) asparagine).

It belongs to the histidine acid phosphatase family. Monomer.

The protein resides in the secreted. It catalyses the reaction 1D-myo-inositol hexakisphosphate + H2O = 1D-myo-inositol 1,2,4,5,6-pentakisphosphate + phosphate. It carries out the reaction 1D-myo-inositol 1,2,4,5,6-pentakisphosphate + H2O = 1D-myo-inositol 1,2,5,6-tetrakisphosphate + phosphate. The catalysed reaction is 1D-myo-inositol 1,2,5,6-tetrakisphosphate + H2O = 1D-myo-inositol 1,2,6-trisphosphate + phosphate. The enzyme catalyses 1D-myo-inositol 1,2,6-trisphosphate + H2O = 1D-myo-inositol 1,2-bisphosphate + phosphate. It catalyses the reaction 1D-myo-inositol 1,2-bisphosphate + H2O = 1D-myo-inositol 2-phosphate + phosphate. In terms of biological role, catalyzes the phosphate monoester hydrolysis of phytic acid (myo-inositol hexakisphosphate), which results in the stepwise formation of myo-inositol pentakis-, tetrakis-, tris-, bis-, and monophosphates, as well as the liberation of inorganic phosphate. Myo-inositol 2-monophosphate is the end product. Has a broad substrate specificity and is also able to dephosphorylate other classic acid phosphatase substrates such as p-nitrophenyl phosphate, phenyl phosphate, fructose 1,6-bisphosphate, glucose 6-phosphate, 3-phosphoglycerate, as well as ADP and ATP. The sequence is that of Phytase A from Aspergillus terreus.